The primary structure comprises 181 residues: SecB-like chaperone Rv1957 (181 aa).

At T2 the chain carries N-acetylthreonine.

It belongs to the SecB-like family. Homotetramer, interacts with antitoxin HigA1.

In terms of biological role, chaperone component of an atypical, type II toxin-antitoxin chaperone (TAC) system. Prevents antitoxin HigA1 aggregation in vitro at a 1:3 chaperone:antitoxin ratio, probably also protects antitoxin HigA1 from protease. Required for neutralization of toxin HigB1 upon ectopic expression in Mycobacterium marinum or E.coli. When expressed in E.coli complements a secB deletion, restores export of OmpA and MBP and inhibits aggregation of proOmpC although it is less efficient than endogenous SecB. Complements the general chaperone function of E.coli SecB less well. The polypeptide is SecB-like chaperone Rv1957 (secBL) (Mycobacterium tuberculosis (strain ATCC 25618 / H37Rv)).